Here is an 864-residue protein sequence, read N- to C-terminus: DNA mismatch repair protein MutS (864 aa).

607–614 (GPNMGGKS) is an ATP binding site.

Belongs to the DNA mismatch repair MutS family.

Functionally, this protein is involved in the repair of mismatches in DNA. It is possible that it carries out the mismatch recognition step. This protein has a weak ATPase activity. The chain is DNA mismatch repair protein MutS from Neisseria meningitidis serogroup C / serotype 2a (strain ATCC 700532 / DSM 15464 / FAM18).